A 616-amino-acid chain; its full sequence is Dihydroxy-acid dehydratase (616 aa).

Aspartate 81 serves as a coordination point for Mg(2+). Cysteine 122 contributes to the [2Fe-2S] cluster binding site. Aspartate 123 and lysine 124 together coordinate Mg(2+). The residue at position 124 (lysine 124) is an N6-carboxylysine. Cysteine 195 is a [2Fe-2S] cluster binding site. Residue glutamate 491 coordinates Mg(2+). Serine 517 serves as the catalytic Proton acceptor.

The protein belongs to the IlvD/Edd family. In terms of assembly, homodimer. It depends on [2Fe-2S] cluster as a cofactor. Requires Mg(2+) as cofactor.

It carries out the reaction (2R)-2,3-dihydroxy-3-methylbutanoate = 3-methyl-2-oxobutanoate + H2O. The catalysed reaction is (2R,3R)-2,3-dihydroxy-3-methylpentanoate = (S)-3-methyl-2-oxopentanoate + H2O. It functions in the pathway amino-acid biosynthesis; L-isoleucine biosynthesis; L-isoleucine from 2-oxobutanoate: step 3/4. Its pathway is amino-acid biosynthesis; L-valine biosynthesis; L-valine from pyruvate: step 3/4. In terms of biological role, functions in the biosynthesis of branched-chain amino acids. Catalyzes the dehydration of (2R,3R)-2,3-dihydroxy-3-methylpentanoate (2,3-dihydroxy-3-methylvalerate) into 2-oxo-3-methylpentanoate (2-oxo-3-methylvalerate) and of (2R)-2,3-dihydroxy-3-methylbutanoate (2,3-dihydroxyisovalerate) into 2-oxo-3-methylbutanoate (2-oxoisovalerate), the penultimate precursor to L-isoleucine and L-valine, respectively. The sequence is that of Dihydroxy-acid dehydratase from Escherichia coli O1:K1 / APEC.